We begin with the raw amino-acid sequence, 76 residues long: Small nuclear ribonucleoprotein G (76 aa).

Residues 4–76 (AHPPELKKFM…IIMLEALERV (73 aa)) enclose the Sm domain.

The protein belongs to the snRNP Sm proteins family. In terms of assembly, core component of the spliceosomal U1, U2, U4 and U5 small nuclear ribonucleoproteins (snRNPs), the building blocks of the spliceosome. Most spliceosomal snRNPs contain a common set of Sm proteins, SNRPB, SNRPD1, SNRPD2, SNRPD3, SNRPE, SNRPF and SNRPG that assemble in a heptameric protein ring on the Sm site of the small nuclear RNA to form the core snRNP. Component of the U1 snRNP. The U1 snRNP is composed of the U1 snRNA and the 7 core Sm proteins SNRPB, SNRPD1, SNRPD2, SNRPD3, SNRPE, SNRPF and SNRPG, and at least three U1 snRNP-specific proteins SNRNP70/U1-70K, SNRPA/U1-A and SNRPC/U1-C. Component of the U4/U6-U5 tri-snRNP complex composed of the U4, U6 and U5 snRNAs and at least PRPF3, PRPF4, PRPF6, PRPF8, PRPF31, SNRNP200, TXNL4A, SNRNP40, SNRPB, SNRPD1, SNRPD2, SNRPD3, SNRPE, SNRPF, SNRPG, DDX23, CD2BP2, PPIH, SNU13, EFTUD2, SART1 and USP39, plus LSM2, LSM3, LSM4, LSM5, LSM6, LSM7 and LSM8. Component of the U7 snRNP complex, or U7 Sm protein core complex, that is composed of the U7 snRNA and at least LSM10, LSM11, SNRPB, SNRPD3, SNRPE, SNRPF and SNRPG; the complex does not contain SNRPD1 and SNRPD2. Component of the minor spliceosome, which splices U12-type introns. Part of the SMN-Sm complex that contains SMN1, GEMIN2/SIP1, DDX20/GEMIN3, GEMIN4, GEMIN5, GEMIN6, GEMIN7, GEMIN8, STRAP/UNRIP and the Sm proteins SNRPB, SNRPD1, SNRPD2, SNRPD3, SNRPE, SNRPF and SNRPG; catalyzes core snRNPs assembly. Forms a 6S pICln-Sm complex composed of CLNS1A/pICln, SNRPD1, SNRPD2, SNRPE, SNRPF and SNRPG; ring-like structure where CLNS1A/pICln mimics additional Sm proteins and which is unable to assemble into the core snRNP. Interacts with GEMIN2 (via N-terminus); the interaction is direct. Interacts with SNRPE; the interaction is direct.

It localises to the cytoplasm. The protein localises to the cytosol. It is found in the nucleus. Plays a role in pre-mRNA splicing as a core component of the spliceosomal U1, U2, U4 and U5 small nuclear ribonucleoproteins (snRNPs), the building blocks of the spliceosome. Component of both the pre-catalytic spliceosome B complex and activated spliceosome C complexes. As a component of the minor spliceosome, involved in the splicing of U12-type introns in pre-mRNAs. As part of the U7 snRNP it is involved in histone 3'-end processing. The polypeptide is Small nuclear ribonucleoprotein G (SNRPG) (Bos taurus (Bovine)).